Here is a 429-residue protein sequence, read N- to C-terminus: Serum response factor-binding protein 1 (429 aa).

Ala-2 carries the N-acetylalanine modification. Coiled coils occupy residues 42–67 (KGTE…AMKE) and 108–146 (LLKK…NHSE). 2 disordered regions span residues 131-157 (AEVE…NGSN) and 176-429 (LAKK…TFDD). A compositionally biased stretch (polar residues) spans 146–157 (ENTLYSNDNGSN). A compositionally biased stretch (basic and acidic residues) spans 183–195 (NSKEKIAKMEHGP). Lys-190 participates in a covalent cross-link: Glycyl lysine isopeptide (Lys-Gly) (interchain with G-Cter in SUMO2). A phosphoserine mark is found at Ser-203, Ser-205, Ser-264, Ser-279, and Ser-281. Acidic residues predominate over residues 249–265 (GGEEFCEEEKEYFDDST). Basic and acidic residues predominate over residues 296-341 (KESSCHSSVKEQKPLEKVFLKEDTGETHGDTRNDKIKPSTETRKLE). Residue Lys-316 forms a Glycyl lysine isopeptide (Lys-Gly) (interchain with G-Cter in SUMO2) linkage. Ser-349, Ser-351, and Ser-367 each carry phosphoserine. Residues 357 to 367 (NFKEQAPKTRS) show a composition bias toward basic and acidic residues. The span at 373–383 (NEPQIKNQFNK) shows a compositional bias: polar residues.

As to quaternary structure, interacts with SRF. Forms complexes with SRF and SRF cofactors ARID2, MYOCD and NKX2-5. Interacts with the N-terminus of SLC2A4. As to expression, abundantly expressed in heart and skeletal muscle, and at much lower levels in brain and lung.

The protein localises to the cytoplasm. It is found in the perinuclear region. Its function is as follows. May be involved in regulating transcriptional activation of cardiac genes during the aging process. May play a role in biosynthesis and/or processing of SLC2A4 in adipose cells. The chain is Serum response factor-binding protein 1 from Homo sapiens (Human).